Reading from the N-terminus, the 678-residue chain is F-box/LRR-repeat protein 5 (678 aa).

Positions 1-159 are hemerythrin-like; it reads MAPFPDEVDL…IKKKVIAQHC (159 aa). Fe(3+)-binding residues include H15, H57, E58, E61, H80, H126, and E130. In terms of domain architecture, F-box spans 202-248; sequence SSSISSLPPEVMLNIFTYLNPQDLCRCSQVNTEWAQLAKTGSLWRHL. Positions 285-308 are disordered; the sequence is YQEWDEDADIDESEETGEEEDSSI. Positions 287–306 are enriched in acidic residues; the sequence is EWDEDADIDESEETGEEEDS. LRR repeat units follow at residues 314–340, 341–366, 367–392, 393–420, 566–594, 595–622, and 623–648; these read EKEL…VLAY, SSAT…DLTQ, TDIS…DLSG, CDKI…RLLK, HSDI…SLSG, CHQI…NLSG, and CLNV…HFYY. [2Fe-2S] cluster-binding residues include C649, C663, C673, and C674. The stretch at 655–678 is one LRR 8 repeat; it reads PHGATASGCQNLQCGFRMCCRSGE.

Part of a SCF (SKP1-cullin-F-box) protein ligase complex. [2Fe-2S] cluster serves as cofactor. Ubiquitinated upon iron and oxygen depletion, leading to its degradation by the proteasome. Ubiquitination is regulated by the hemerythrin-like region that acts as an oxygen and iron sensor.

It localises to the cytoplasm. The protein resides in the perinuclear region. The protein localises to the nucleus. It participates in protein modification; protein ubiquitination. In terms of biological role, component of some SCF (SKP1-cullin-F-box) protein ligase complex that plays a central role in iron homeostasis by promoting the ubiquitination and subsequent degradation of ireb2/irp2. Upon high iron and oxygen level, it specifically recognizes and binds ireb2/irp2, promoting its ubiquitination and degradation by the proteasome. The polypeptide is F-box/LRR-repeat protein 5 (fbxl5) (Xenopus laevis (African clawed frog)).